We begin with the raw amino-acid sequence, 619 residues long: Probable ATP-dependent RNA helicase DDX59 (619 aa).

Positions 1 to 101 (MFVPRSLKIK…KSFSKTQRWP (101 aa)) are disordered. The segment covering 12-27 (SSNDDLKSGEAKKSKP) has biased composition (basic and acidic residues). A Glycyl lysine isopeptide (Lys-Gly) (interchain with G-Cter in SUMO2) cross-link involves residue Lys26. Residues 59-76 (ASSTNSPSCQLAEVSSTG) show a composition bias toward polar residues. Ser64 is subject to Phosphoserine. The span at 79-91 (EGVKDSHPSEEPV) shows a compositional bias: basic and acidic residues. Residues 104-133 (GEPVCVVCGRYGEYICDKTDEDVCSLECKA) form an HIT-type zinc finger. The residue at position 160 (Ser160) is a Phosphoserine. The Q motif signature appears at 203–231 (IDFEHCGFPETLNQNLKKSGYEVPTPIQM). In terms of domain architecture, Helicase ATP-binding spans 234–405 (IPVGLLGRDI…DQLLHNPVRI (172 aa)). 247–254 (ADTGSGKT) contacts ATP. The DEAD box motif lies at 353-356 (DEAD). A Helicase C-terminal domain is found at 416 to 579 (SVRQIILWVE…ILPPQLLNSP (164 aa)). The span at 583–594 (EQKRKEQQKDRQ) shows a compositional bias: basic and acidic residues. Residues 583-603 (EQKRKEQQKDRQTQNSLVTGA) form a disordered region.

The protein belongs to the DEAD box helicase family. DDX59 subfamily. As to quaternary structure, interacts (via HIT-type zinc finger) with the RUVBL1/RUVBL2 complex in the presence of ADP.

Its subcellular location is the cytoplasm. The protein localises to the nucleus. It carries out the reaction ATP + H2O = ADP + phosphate + H(+). The protein is Probable ATP-dependent RNA helicase DDX59 (Ddx59) of Mus musculus (Mouse).